A 282-amino-acid chain; its full sequence is ATP synthase gamma chain (282 aa).

The protein belongs to the ATPase gamma chain family. As to quaternary structure, F-type ATPases have 2 components, CF(1) - the catalytic core - and CF(0) - the membrane proton channel. CF(1) has five subunits: alpha(3), beta(3), gamma(1), delta(1), epsilon(1). CF(0) has three main subunits: a, b and c. In this bacterium the a and b subunits are transcribed but do not seem to be translated, thus the ATP synthase consists of the alpha, beta, gamma, delta, epsilon and c subunits.

It is found in the cell membrane. In terms of biological role, produces ATP from ADP in the presence of a proton gradient across the membrane. The gamma chain is believed to be important in regulating ATPase activity and the flow of protons through the CF(0) complex. This Moorella thermoacetica (strain ATCC 39073 / JCM 9320) protein is ATP synthase gamma chain.